Reading from the N-terminus, the 427-residue chain is Glutamate-1-semialdehyde 2,1-aminomutase (427 aa).

Lys265 carries the N6-(pyridoxal phosphate)lysine modification.

The protein belongs to the class-III pyridoxal-phosphate-dependent aminotransferase family. HemL subfamily. As to quaternary structure, homodimer. The cofactor is pyridoxal 5'-phosphate.

The protein localises to the cytoplasm. It catalyses the reaction (S)-4-amino-5-oxopentanoate = 5-aminolevulinate. It participates in porphyrin-containing compound metabolism; protoporphyrin-IX biosynthesis; 5-aminolevulinate from L-glutamyl-tRNA(Glu): step 2/2. The protein is Glutamate-1-semialdehyde 2,1-aminomutase of Nitratiruptor sp. (strain SB155-2).